A 123-amino-acid polypeptide reads, in one-letter code: Cyclic ether formation enzyme xenC (123 aa).

The signal sequence occupies residues 1 to 24; sequence MSSLLLSDVLSYGIFGFSALCVQA. 2 helical membrane-spanning segments follow: residues 58–78 and 102–122; these read SALRYVFVSINIAVCVLLWSP and LGESPIPHLLLVSTVGAAILV.

It belongs to the cyclic ether formation enzyme xenC family.

It is found in the membrane. Its pathway is mycotoxin biosynthesis. Its function is as follows. Cyclic ether formation enzyme; part of the gene cluster that mediates the biosynthesis of xenoacremones such as xenoacremone A, a compound that shows inhibitory activity toward the PI3K/AKT signaling pathway and which has the ability to induce apoptosis of A549 lung cancer cells. Within the pathway, cooperation of the hybrid PKS-NRPS xenE and the trans-acting enoyl reductase xenG is responsible for the formation of the reduced tyrosine-nonaketide derivative. The alpha/beta hydrolase xenA then accelerates intramolecular nucleophilic attack to give a pyrrolidone derivative. Subsequently, three enzymes, xenF, xenD, and xenC, coordinately participate in the conversion to xenoacremone B. XenF catalyzes sigmatropic rearrangement to form an A-ring, which leads to an unusual intermediate with a hexane ring, which is required for the formation of the tricarbocyclic product. Epoxidation catalyzed by xenD and the formation of the paracyclophane ether catalyzed by xenC initiate a spontaneous intramolecular Diels-Alder (IMDA) reaction to yield xenoacremone B. Spontaneous hydration of xenoacremone B leads to the formation of xenoacremone A, which undergoes subsequent methylation to afford xenoacremone C. This chain is Cyclic ether formation enzyme xenC, found in Xenoacremonium sinensis (Endophyte fungus).